The following is a 264-amino-acid chain: Matrilysin (264 aa).

The first 17 residues, 1 to 17, serve as a signal peptide directing secretion; sequence MQLTLFCFVCLLPGHLA. A propeptide spans 18-94 (activation peptide); the sequence is LPLSQEAGDV…PRCGVPDVAE (77 aa). The Cysteine switch motif lies at 85-92; sequence PRCGVPDV. Cys-87 lines the Zn(2+) pocket. Asp-153 lines the Ca(2+) pocket. Zn(2+) is bound by residues His-163 and Asp-165. Asp-170, Gly-171, Gly-173, and Thr-175 together coordinate Ca(2+). His-178 contributes to the Zn(2+) binding site. Gly-185, Gly-187, and Asp-189 together coordinate Ca(2+). Position 191 (His-191) interacts with Zn(2+). Positions 193 and 196 each coordinate Ca(2+). Zn(2+) is bound at residue His-214. Glu-215 is a catalytic residue. His-218 and His-224 together coordinate Zn(2+).

Belongs to the peptidase M10A family. Requires Ca(2+) as cofactor. It depends on Zn(2+) as a cofactor. As to expression, expressed in the intestinal epithelium (at protein level).

Its subcellular location is the secreted. It localises to the extracellular space. The protein resides in the extracellular matrix. The enzyme catalyses Cleavage of 14-Ala-|-Leu-15 and 16-Tyr-|-Leu-17 in B chain of insulin. No action on collagen types I, II, IV, V. Cleaves gelatin chain alpha2(I) &gt; alpha1(I).. Its function is as follows. Degrades casein, gelatins of types I, III, IV, and V, and fibronectin. Activates procollagenase. May play a role in tissue reorganization. This Mus musculus (Mouse) protein is Matrilysin (Mmp7).